The chain runs to 156 residues: MTQSQHSQSAREALAERIVEAKTRKNLTFEQINEGTGLSVAFTTAALLGQHPLPADAARVVAAKLDLDDDAQRLLQTIPVRGSIPGGVPTDPTIYRFYEIVQVYGSTLKALIHEQFGDGIVSAINFKLDIKKVDDPEGGSRAVITLDGKYLPTKPF.

Residues Arg-96, Glu-99, and Ser-122 contribute to the active site.

It belongs to the cyanase family.

The enzyme catalyses cyanate + hydrogencarbonate + 3 H(+) = NH4(+) + 2 CO2. In terms of biological role, catalyzes the reaction of cyanate with bicarbonate to produce ammonia and carbon dioxide. In Burkholderia pseudomallei (strain 1106a), this protein is Cyanate hydratase.